The primary structure comprises 558 residues: MEIILFLTMMVMITYVFSGYLYRVALVQSSRVDLIFTRFENMCFKIIGTDLEHMSAKTYVKHFLAFNGFMGFITFVLLIVQQWLFLNPNHILNQSIDLAFNTAISFLTNSNLQHYNGESDVTYLTQMIVMTYLMFTSSASGYAVCIAMLRRLTGLTNIIGNFYQDIVRFIVRVLLPLSCLISILLMTQGVPQTLHANLMIRTLSGHIQHIAFGPIASLESIKHLGTNGGGFLAGNSATPFENPNIWSNFIEMGSMMLLPMSMLFLFGRMLSRHGKRVHRHALILFVAMFFIFIAILTLTMWSEYRGNPILANLGIYGPNMEGKEVRFGAGLSALFTVITTAFTTGSVNNMHDSLTPIGGLGPMVLMMLNVVFGGEGVGLMNLLIFVLLTVFICSLMVGKTPEYLNMPIGAREMKCIVLVFLIHPILILVFSALAFMIPGASESITNPSFHGISQVMYEMTSAAANNGSGFEGLKDDTTFWNISTGIIMLLSRYIPIILQLMIASSLVNKKSYHQDKYTIAIDKPYFGVSLIVFIVLLSGLTFIPVLLLGPIGEFLTLK.

Helical transmembrane passes span 1 to 21, 66 to 86, 127 to 147, 166 to 186, 245 to 265, 281 to 301, 327 to 347, 354 to 374, 377 to 397, 416 to 436, 482 to 502, and 531 to 551; these read MEIILFLTMMVMITYVFSGYL, FNGFMGFITFVLLIVQQWLFL, MIVMTYLMFTSSASGYAVCIA, IVRFIVRVLLPLSCLISILLM, IWSNFIEMGSMMLLPMSMLFL, ALILFVAMFFIFIAILTLTMW, FGAGLSALFTVITTAFTTGSV, LTPIGGLGPMVLMMLNVVFGG, VGLMNLLIFVLLTVFICSLMV, IVLVFLIHPILILVFSALAFM, ISTGIIMLLSRYIPIILQLMI, and IVFIVLLSGLTFIPVLLLGPI.

This sequence belongs to the KdpA family. As to quaternary structure, the system is composed of three essential subunits: KdpA, KdpB and KdpC.

The protein resides in the cell membrane. Its function is as follows. Part of the high-affinity ATP-driven potassium transport (or Kdp) system, which catalyzes the hydrolysis of ATP coupled with the electrogenic transport of potassium into the cytoplasm. This subunit binds the extracellular potassium ions and delivers the ions to the membrane domain of KdpB through an intramembrane tunnel. This chain is Potassium-transporting ATPase potassium-binding subunit 1, found in Staphylococcus aureus (strain Mu50 / ATCC 700699).